The following is a 1370-amino-acid chain: Zinc finger MYM-type protein 3 (1370 aa).

Composition is skewed to low complexity over residues 1 to 12 (MDPSDFPSPFDP), 40 to 56 (APSR…SSGA), and 130 to 146 (GAGA…EPLA). Disordered stretches follow at residues 1–73 (MDPS…PGGV) and 85–310 (GLLY…MGTK). Over residues 227–255 (TGKEIEKPPERVQKRSERVRRAEPPKPEV) the composition is skewed to basic and acidic residues. Phosphoserine is present on residues Ser265 and Ser269. The segment covering 265-281 (SDEDSDAMVDDPNDEDF) has biased composition (acidic residues). Glycyl lysine isopeptide (Lys-Gly) (interchain with G-Cter in SUMO2) cross-links involve residues Lys310, Lys322, and Lys330. 9 MYM-type zinc fingers span residues 334-368 (QLFC…TKDS), 380-424 (HEFC…LHEV), 431-466 (HRLC…RPGG), 479-513 (KRFC…FEML), 523-561 (SLFC…PCYY), 569-606 (YQFC…KPEV), 614-648 (FQFC…HEKL), 655-694 (KSFC…GVTE), and 701-735 (WDFC…LETI). Positions 761-789 (NLDTQSGPESLLNSQSSESKPQTPSQTKV) are enriched in polar residues. A disordered region spans residues 761-831 (NLDTQSGPES…PPPPATPRKN (71 aa)). Glycyl lysine isopeptide (Lys-Gly) (interchain with G-Cter in SUMO2) cross-links involve residues Lys780 and Lys788. Positions 790–799 (ENNHTVRTPD) are enriched in basic and acidic residues. Residue Thr797 is modified to Phosphothreonine. A Glycyl lysine isopeptide (Lys-Gly) (interchain with G-Cter in SUMO2) cross-link involves residue Lys806. Residues 816 to 827 (VPTPPPPPPPAT) show a composition bias toward pro residues. Residues Thr818 and Thr827 each carry the phosphothreonine modification. Residues Lys848, Lys862, Lys921, and Lys1276 each participate in a glycyl lysine isopeptide (Lys-Gly) (interchain with G-Cter in SUMO2) cross-link.

In terms of assembly, may be a component of a BHC histone deacetylase complex that contains HDAC1, HDAC2, HMG20B/BRAF35, KDM1A, RCOR1/CoREST, PHF21A/BHC80, ZMYM2, ZNF217, ZMYM3, GSE1 and GTF2I. As to expression, ubiquitously expressed in all embryonic stages and adult tissues.

Its subcellular location is the nucleus. Its function is as follows. Plays a role in the regulation of cell morphology and cytoskeletal organization. This chain is Zinc finger MYM-type protein 3 (Zmym3), found in Mus musculus (Mouse).